The primary structure comprises 246 residues: Small ribosomal subunit protein uS2 (246 aa).

This sequence belongs to the universal ribosomal protein uS2 family.

The polypeptide is Small ribosomal subunit protein uS2 (Dictyoglomus turgidum (strain DSM 6724 / Z-1310)).